The primary structure comprises 217 residues: Deoxyribose-phosphate aldolase (217 aa).

The Proton donor/acceptor role is filled by Asp-90. The Schiff-base intermediate with acetaldehyde role is filled by Lys-152. The active-site Proton donor/acceptor is Lys-181.

The protein belongs to the DeoC/FbaB aldolase family. DeoC type 1 subfamily.

Its subcellular location is the cytoplasm. The enzyme catalyses 2-deoxy-D-ribose 5-phosphate = D-glyceraldehyde 3-phosphate + acetaldehyde. Its pathway is carbohydrate degradation; 2-deoxy-D-ribose 1-phosphate degradation; D-glyceraldehyde 3-phosphate and acetaldehyde from 2-deoxy-alpha-D-ribose 1-phosphate: step 2/2. In terms of biological role, catalyzes a reversible aldol reaction between acetaldehyde and D-glyceraldehyde 3-phosphate to generate 2-deoxy-D-ribose 5-phosphate. The polypeptide is Deoxyribose-phosphate aldolase (Metamycoplasma hominis (Mycoplasma hominis)).